The chain runs to 328 residues: D-cysteine desulfhydrase (328 aa).

Lys-51 carries the N6-(pyridoxal phosphate)lysine modification.

Belongs to the ACC deaminase/D-cysteine desulfhydrase family. Homodimer. The cofactor is pyridoxal 5'-phosphate.

The enzyme catalyses D-cysteine + H2O = hydrogen sulfide + pyruvate + NH4(+) + H(+). Functionally, catalyzes the alpha,beta-elimination reaction of D-cysteine and of several D-cysteine derivatives. It could be a defense mechanism against D-cysteine. This is D-cysteine desulfhydrase from Escherichia coli (strain SMS-3-5 / SECEC).